A 117-amino-acid chain; its full sequence is uncharacterized protein (117 aa).

This is an uncharacterized protein from Methanocaldococcus jannaschii (strain ATCC 43067 / DSM 2661 / JAL-1 / JCM 10045 / NBRC 100440) (Methanococcus jannaschii).